Reading from the N-terminus, the 1685-residue chain is Myomesin-1 (1685 aa).

The interval 33–80 is disordered; sequence KKRSAVYTQGSTAYSSRSSAAHRRESEAFRRASASSSQQQASQHALSS. Composition is skewed to low complexity over residues 41 to 51 and 63 to 80; these read QGSTAYSSRSS and RASA…ALSS. At S113 the chain carries Phosphoserine. A disordered region spans residues 177–244; the sequence is GITTSKQSTA…TSEKKSRKVV (68 aa). Low complexity predominate over residues 179–220; that stretch reads TTSKQSTASKQTTASKQSTASKQSTASKQSTASRQSTASRQS. 6 consecutive repeat copies span residues 182-187, 188-193, 194-199, 200-205, 206-211, and 212-217. The tract at residues 182-217 is 6 X 6 AA tandem repeats; the sequence is KQSTASKQTTASKQSTASKQSTASKQSTASRQSTAS. A compositionally biased stretch (polar residues) spans 221–233; it reads VVSKQATSALQQE. Ig-like C2-type domains follow at residues 277 to 368 and 396 to 498; these read PEFI…ASVV and PYGY…AYVF. Fibronectin type-III domains lie at 512–607, 640–734, and 741–834; these read APLD…ALDP, PPTD…VVGD, and APGK…VKAA. Positions 840–938 are disordered; sequence SPDVCPALSD…TDRAPPSPPC (99 aa). Low complexity predominate over residues 874-888; the sequence is LLGSKPNKPSLPSSS. A phosphoserine mark is found at S883 and S887. Over residues 889–902 the composition is skewed to polar residues; sequence QNLGQTEVSKVSET. The segment covering 920 to 931 has biased composition (basic and acidic residues); the sequence is SKSDPLKKKTDR. 2 consecutive Fibronectin type-III domains span residues 933–1034 and 1041–1140; these read PPSP…CEEW and PPHS…TRPG. A Phosphoserine modification is found at S1054. Ig-like C2-type domains lie at 1132–1230, 1358–1444, and 1573–1662; these read PVVA…EELK, PHFV…LKLV, and RVLG…FTVS. Residues C1160 and C1210 are joined by a disulfide bond.

As to quaternary structure, homodimer. Interacts with TTN/titin. Interacts with PNKD.

The protein localises to the cytoplasm. It is found in the myofibril. Its subcellular location is the sarcomere. The protein resides in the m line. Functionally, major component of the vertebrate myofibrillar M band. Binds myosin, titin, and light meromyosin. This binding is dose dependent. In Homo sapiens (Human), this protein is Myomesin-1 (MYOM1).